We begin with the raw amino-acid sequence, 28 residues long: Omega-conotoxin-like CnVIIH (28 aa).

Intrachain disulfides connect cysteine 1–cysteine 16, cysteine 8–cysteine 20, and cysteine 15–cysteine 27. Proline 7 is subject to 4-hydroxyproline; partial. Methionine sulfoxide is present on methionine 12. Cysteine 27 carries the cysteine amide modification.

This sequence belongs to the conotoxin O1 superfamily. As to expression, expressed by the venom duct.

The protein localises to the secreted. Omega-conotoxins act at presynaptic membranes, they bind and block voltage-gated calcium channels (Cav). This toxin blocks N-type calcium channels (Cav2.2/CACNA1B) with high potency. Unexpectedly, it does not show any blocking activity at amphibian neuromuscular junction. In vivo, when intracerebroventricularly injected into mice causes shaking activity, and, at higher doses, causes mild tremors. When injected intramuscularly into fish, it causes paralysis, and, at higher doses, causes death. This is Omega-conotoxin-like CnVIIH from Conus consors (Singed cone).